Consider the following 750-residue polypeptide: Catalase-peroxidase (750 aa).

The segment at residues 112-235 (WHSAGTYRIG…LGAAHMGLIY (124 aa)) is a cross-link (tryptophyl-tyrosyl-methioninium (Trp-Tyr) (with M-261)). H113 functions as the Proton acceptor in the catalytic mechanism. A cross-link (tryptophyl-tyrosyl-methioninium (Tyr-Met) (with W-112)) is located at residues 235-261 (YVNPEGHNGNPDPVEAASYIRETFGRM). H276 lines the heme b pocket.

The protein belongs to the peroxidase family. Peroxidase/catalase subfamily. Homodimer or homotetramer. Heme b is required as a cofactor. Post-translationally, formation of the three residue Trp-Tyr-Met cross-link is important for the catalase, but not the peroxidase activity of the enzyme.

It catalyses the reaction H2O2 + AH2 = A + 2 H2O. It carries out the reaction 2 H2O2 = O2 + 2 H2O. Its function is as follows. Bifunctional enzyme with both catalase and broad-spectrum peroxidase activity. The chain is Catalase-peroxidase from Christiangramia forsetii (strain DSM 17595 / CGMCC 1.15422 / KT0803) (Gramella forsetii).